Reading from the N-terminus, the 934-residue chain is ATP-dependent RNA helicase dbp-10 (934 aa).

Positions 21-43 (LFNNDSDFEDNSSKHHTKKGAVT) are disordered. The Q motif motif lies at 99–127 (GGFQAMGLNAHLLRAITRKGFSVPTPIQR). Positions 130-302 (IPLILERKDV…RAGLQEPSLV (173 aa)) constitute a Helicase ATP-binding domain. 143–150 (ARTGSGKT) is an ATP binding site. The short motif at 250-253 (DEAD) is the DEAD box element. Disordered stretches follow at residues 343–370 (GPPE…NPKE), 613–722 (ELGP…FQDP), and 851–934 (GAQP…RQKR). The region spanning 359–513 (KRKREYRPNP…KNPSFAADVV (155 aa)) is the Helicase C-terminal domain. Acidic residues-rich tracts occupy residues 644 to 654 (DEDDEDVDMED) and 662 to 700 (EETN…DSEM). Basic and acidic residues predominate over residues 864–926 (EKAPKDADKF…VAEKKREKNA (63 aa)).

Belongs to the DEAD box helicase family. DDX54/DBP10 subfamily.

The protein resides in the nucleus. The protein localises to the nucleolus. The enzyme catalyses ATP + H2O = ADP + phosphate + H(+). Functionally, ATP-binding RNA helicase involved in the biogenesis of 60S ribosomal subunits and is required for the normal formation of 25S and 5.8S rRNAs. This Neurospora crassa (strain ATCC 24698 / 74-OR23-1A / CBS 708.71 / DSM 1257 / FGSC 987) protein is ATP-dependent RNA helicase dbp-10 (dbp-10).